The sequence spans 348 residues: Ion-translocating oxidoreductase complex subunit D (348 aa).

Transmembrane regions (helical) follow at residues 25 to 45 (ILAALPGLAVQCYFFGWGTFI), 68 to 88 (PISPTLMDQSAVLTALLIGVA), and 124 to 144 (AMAAYVLLLVSFPVLMTTWAA). At Thr-182 the chain carries FMN phosphoryl threonine. 5 helical membrane-spanning segments follow: residues 211–231 (TGEGWFWVNLAYLCGGLFLLA), 237–257 (WHISGGLIGALFVCSLFGFGA), 263–283 (ASPLFNLFSGATMLAAFFIAT), 296–316 (LLFGAMIGVLIYLIRTFGGYP), and 317–337 (DGVAFAVLLANLCAPLIDYYI).

This sequence belongs to the NqrB/RnfD family. The complex is composed of six subunits: RnfA, RnfB, RnfC, RnfD, RnfE and RnfG. The cofactor is FMN.

It localises to the cell inner membrane. Functionally, part of a membrane-bound complex that couples electron transfer with translocation of ions across the membrane. This chain is Ion-translocating oxidoreductase complex subunit D, found in Shewanella amazonensis (strain ATCC BAA-1098 / SB2B).